The primary structure comprises 206 residues: MAATRCLRWGLSRAGVWLLPPPARCPRRALHKQKDGTEFKSIYSLDKLYPESQGSDTAWRVPNGAKQADSDIPLDRLTISYCRSSGPGGQNVNKVNSKAEVRFHLATAEWIAEPVRQKIAITHKNKINRLGELILTSESSRYQFRNLADCLQKIRDMITEASQTPKEPTKEDVKLHRIRIENMNRERLRQKRIHSAVKTSRRVDMD.

A mitochondrion-targeting transit peptide spans 1–29 (MAATRCLRWGLSRAGVWLLPPPARCPRRA). Gln90 carries the N5-methylglutamine modification.

It belongs to the prokaryotic/mitochondrial release factor family. Mitochondrion-specific ribosomal protein mL62 subfamily. As to quaternary structure, component of the mitochondrial large ribosomal subunit (mt-LSU). Mature mammalian 55S mitochondrial ribosomes consist of a small (28S) and a large (39S) subunit. The 28S small subunit contains a 12S ribosomal RNA (12S mt-rRNA) and 30 different proteins. The 39S large subunit contains a 16S rRNA (16S mt-rRNA), a copy of mitochondrial valine transfer RNA (mt-tRNA(Val)), which plays an integral structural role, and 52 different proteins. Methylation of glutamine in the GGQ triplet by HEMK1. Down-regulated during the in vitro differentiation of HT29-D4 colon carcinoma cells.

Its subcellular location is the mitochondrion. The enzyme catalyses an N-acyl-L-alpha-aminoacyl-tRNA + H2O = an N-acyl-L-amino acid + a tRNA + H(+). Its function is as follows. Essential peptidyl-tRNA hydrolase component of the mitochondrial large ribosomal subunit. Acts as a codon-independent translation release factor that has lost all stop codon specificity and directs the termination of translation in mitochondrion, possibly in case of abortive elongation. Involved in the hydrolysis of peptidyl-tRNAs that have been prematurely terminated and thus in the recycling of stalled mitochondrial ribosomes. The protein is Large ribosomal subunit protein mL62 of Homo sapiens (Human).